Here is a 597-residue protein sequence, read N- to C-terminus: Putative diflavin flavoprotein A 3 (597 aa).

The segment at 59–254 is zinc metallo-hydrolase; sequence QRGTTANSYL…YPAQTYAPSH (196 aa). Residues 283–421 enclose the Flavodoxin-like domain; it reads VALIYASAYG…MCEEAGTDFA (139 aa). A flavodoxin-reductase-like region spans residues 449-597; that stretch reads LGRLVGSLCV…VHHRKSGDHY (149 aa).

This sequence in the N-terminal section; belongs to the zinc metallo-hydrolase group 3 family. It in the C-terminal section; belongs to the flavodoxin reductase family. Fe cation serves as cofactor.

Its function is as follows. Mediates electron transfer from NADH to oxygen, reducing it to water. This modular protein has 3 redox cofactors, in other organisms the same activity requires 2 or 3 proteins. This is Putative diflavin flavoprotein A 3 (dfa3) from Synechocystis sp. (strain ATCC 27184 / PCC 6803 / Kazusa).